The chain runs to 728 residues: Procollagen-lysine,2-oxoglutarate 5-dioxygenase 1 (728 aa).

The N-terminal stretch at 1–18 is a signal peptide; the sequence is MRSLLLLAPLAWLLLVQA. 2 N-linked (GlcNAc...) asparagine glycosylation sites follow: Asn-198 and Asn-539. The Fe2OG dioxygenase domain occupies 637–728; the sequence is QFDLAFVVRY…RYIAVSFVDP (92 aa). The Fe cation site is built by His-657 and Asp-659. Asn-687 carries N-linked (GlcNAc...) asparagine glycosylation. Fe cation is bound at residue His-709. Arg-719 is an active-site residue.

In terms of assembly, homodimer. Identified in a complex with P3H3 and P3H4. Fe(2+) serves as cofactor. Requires L-ascorbate as cofactor. Highly expressed in the liver, heart, lung, skeletal muscle and kidney.

It is found in the rough endoplasmic reticulum membrane. It carries out the reaction L-lysyl-[collagen] + 2-oxoglutarate + O2 = (5R)-5-hydroxy-L-lysyl-[collagen] + succinate + CO2. Part of a complex composed of PLOD1, P3H3 and P3H4 that catalyzes hydroxylation of lysine residues in collagen alpha chains and is required for normal assembly and cross-linkling of collagen fibrils. Forms hydroxylysine residues in -Xaa-Lys-Gly- sequences in collagens. These hydroxylysines serve as sites of attachment for carbohydrate units and are essential for the stability of the intermolecular collagen cross-links. In Mus musculus (Mouse), this protein is Procollagen-lysine,2-oxoglutarate 5-dioxygenase 1 (Plod1).